Reading from the N-terminus, the 217-residue chain is Aprataxin-like protein (217 aa).

An HIT domain is found at 6-139 (ALKNYVTSPE…HIHVISKDFH (134 aa)). Interaction with DNA stretches follow at residues 34-38 (DSFPK), 121-132 (HSVPSMANLHIH), and 144-148 (KNKKH). The active-site Nucleophile is the histidine 130. Positions 188, 191, 205, and 209 each coordinate Zn(2+).

It is found in the nucleus. The protein resides in the cytoplasm. It catalyses the reaction a 5'-end adenosine-5'-diphospho-5'-2'-deoxyribonucleoside-DNA + H2O = a 5'-end 5'-phospho-2'-deoxyribonucleoside-DNA + AMP + 2 H(+). The enzyme catalyses a 5'-end adenosine-5'-diphospho-5'-ribonucleoside-2'-deoxyribonucleotide-DNA + H2O = a 5'-end 5'-phospho-ribonucleoside-2'-deoxyribonucleotide-DNA + AMP + 2 H(+). It carries out the reaction a 3'-end 2'-deoxyribonucleotide-3'-diphospho-5'-guanosine-DNA + H2O = a 3'-end 2'-deoxyribonucleotide 3'-phosphate-DNA + GMP + 2 H(+). Its function is as follows. DNA-binding protein involved in single-strand DNA break repair, double-strand DNA break repair and base excision repair. Resolves abortive DNA ligation intermediates formed either at base excision sites, or when DNA ligases attempt to repair non-ligatable breaks induced by reactive oxygen species. Catalyzes the release of adenylate groups covalently linked to 5'-phosphate termini, resulting in the production of 5'-phosphate termini that can be efficiently rejoined. Likewise, catalyzes the release of 3'-linked guanosine (DNAppG) and inosine (DNAppI) from DNA, but has higher specific activity with 5'-linked adenosine (AppDNA). In Saccharomyces cerevisiae (strain ATCC 204508 / S288c) (Baker's yeast), this protein is Aprataxin-like protein (HNT3).